Reading from the N-terminus, the 297-residue chain is Formylmethanofuran--tetrahydromethanopterin formyltransferase (297 aa).

Belongs to the FTR family. Homotetramer.

It localises to the cytoplasm. It catalyses the reaction N-formylmethanofuran + 5,6,7,8-tetrahydromethanopterin + H(+) = N(5)-formyl-5,6,7,8-tetrahydromethanopterin + methanofuran. Its pathway is metabolic intermediate metabolism; lactate oxidation. Functionally, catalyzes the transfer of a formyl group from 5-formyl tetrahydromethanopterin (5-formyl-H(4)MPT) to methanofuran (MFR) to produce formylmethanofuran (formyl-MFR) and tetrahydromethanopterin (H(4)MPT). The polypeptide is Formylmethanofuran--tetrahydromethanopterin formyltransferase (Archaeoglobus fulgidus (strain ATCC 49558 / DSM 4304 / JCM 9628 / NBRC 100126 / VC-16)).